The sequence spans 353 residues: Green-sensitive opsin-2 (353 aa).

Residues 1–47 (MAAHEPVFAARRHNEDTTRESAFVYTNANNTRDPFEGPNYHIAPRWV) are Extracellular-facing. N29 carries an N-linked (GlcNAc...) asparagine glycan. The helical transmembrane segment at 48–72 (YNVSSLWMIFVVIASVFTNGLVIVA) threads the bilayer. At 73-84 (TAKFKKLRHPLN) the chain is on the cytoplasmic side. Residues 85 to 110 (WILVNLAIADLGETVLASTISVINQI) traverse the membrane as a helical segment. Over 111 to 124 (FGYFILGHPMCVFE) the chain is Extracellular. A disulfide bridge connects residues C121 and C198. A helical transmembrane segment spans residues 125 to 144 (GWTVSVCGITALWSLTIISW). Over 145–163 (ERWVVVCKPFGNVKFDGKW) the chain is Cytoplasmic. A helical membrane pass occupies residues 164 to 187 (AAGGIIFSWVWAIIWCTPPIFGWS). Topologically, residues 188-213 (RYWPHGLKTSCGPDVFSGSEDPGVAS) are extracellular. The helical transmembrane segment at 214–241 (YMITLMLTCCILPLSIIIICYIFVWSAI) threads the bilayer. Residues 242–263 (HQVAQQQKDSESTQKAEKEVSR) are Cytoplasmic-facing. A helical membrane pass occupies residues 264–287 (MVVVMILAFIVCWGPYASFATFSA). The Extracellular segment spans residues 288 to 295 (VNPGYAWH). The helical transmembrane segment at 296 to 320 (PLAAAMPAYFAKSATIYNPIIYVFM) threads the bilayer. N6-(retinylidene)lysine is present on K307. Residues 321 to 353 (NRQFRSCIMQLFGKKVEDASEVSGSTTEVSTAS) are Cytoplasmic-facing.

This sequence belongs to the G-protein coupled receptor 1 family. Opsin subfamily. The color pigments are found in the cone photoreceptor cells.

The protein resides in the membrane. In terms of biological role, visual pigments are the light-absorbing molecules that mediate vision. They consist of an apoprotein, opsin, covalently linked to cis-retinal. The chain is Green-sensitive opsin-2 (G101) from Psalidodon fasciatus (Banded astyanax).